Reading from the N-terminus, the 187-residue chain is Ribosome-recycling factor (187 aa).

The protein belongs to the RRF family.

It is found in the cytoplasm. Responsible for the release of ribosomes from messenger RNA at the termination of protein biosynthesis. May increase the efficiency of translation by recycling ribosomes from one round of translation to another. This is Ribosome-recycling factor from Ligilactobacillus salivarius (strain UCC118) (Lactobacillus salivarius).